We begin with the raw amino-acid sequence, 273 residues long: HMP-PP phosphatase (273 aa).

Catalysis depends on aspartate 8, which acts as the Nucleophile. Positions 8, 10, and 212 each coordinate Mg(2+).

It belongs to the HAD-like hydrolase superfamily. Cof family. Requires Mg(2+) as cofactor.

It catalyses the reaction 4-amino-2-methyl-5-(diphosphooxymethyl)pyrimidine + H2O = 4-amino-2-methyl-5-(phosphooxymethyl)pyrimidine + phosphate + H(+). Its function is as follows. Catalyzes the hydrolysis of 4-amino-2-methyl-5-hydroxymethylpyrimidine pyrophosphate (HMP-PP) to 4-amino-2-methyl-5-hydroxymethylpyrimidine phosphate (HMP-P). This is HMP-PP phosphatase from Yersinia pseudotuberculosis serotype IB (strain PB1/+).